The chain runs to 255 residues: 1-(5-phosphoribosyl)-5-[(5-phosphoribosylamino)methylideneamino] imidazole-4-carboxamide isomerase (255 aa).

The active-site Proton acceptor is the aspartate 8. Residue aspartate 129 is the Proton donor of the active site.

It belongs to the HisA/HisF family.

Its subcellular location is the cytoplasm. The catalysed reaction is 1-(5-phospho-beta-D-ribosyl)-5-[(5-phospho-beta-D-ribosylamino)methylideneamino]imidazole-4-carboxamide = 5-[(5-phospho-1-deoxy-D-ribulos-1-ylimino)methylamino]-1-(5-phospho-beta-D-ribosyl)imidazole-4-carboxamide. The protein operates within amino-acid biosynthesis; L-histidine biosynthesis; L-histidine from 5-phospho-alpha-D-ribose 1-diphosphate: step 4/9. The sequence is that of 1-(5-phosphoribosyl)-5-[(5-phosphoribosylamino)methylideneamino] imidazole-4-carboxamide isomerase from Prochlorococcus marinus (strain MIT 9313).